We begin with the raw amino-acid sequence, 187 residues long: Elongation factor P (187 aa).

This sequence belongs to the elongation factor P family.

It is found in the cytoplasm. It participates in protein biosynthesis; polypeptide chain elongation. Functionally, involved in peptide bond synthesis. Stimulates efficient translation and peptide-bond synthesis on native or reconstituted 70S ribosomes in vitro. Probably functions indirectly by altering the affinity of the ribosome for aminoacyl-tRNA, thus increasing their reactivity as acceptors for peptidyl transferase. This chain is Elongation factor P, found in Rhodococcus opacus (strain B4).